The primary structure comprises 164 residues: Lipoprotein signal peptidase (164 aa).

The next 4 helical transmembrane spans lie at 8–28 (IVAAVAALIADQASKLWLLFV), 39–59 (VTPFFDLVLAWNTGISYGWFQ), 64–84 (VGATILLAIKAGAVVLLAIWM), and 91–111 (LATIGLGLIIGGAIGNAIDRF). Catalysis depends on residues Asp118 and Asp140. The helical transmembrane segment at 131–151 (YSWYVFNLADVAIVAGVIALL) threads the bilayer.

The protein belongs to the peptidase A8 family.

It is found in the cell inner membrane. It catalyses the reaction Release of signal peptides from bacterial membrane prolipoproteins. Hydrolyzes -Xaa-Yaa-Zaa-|-(S,diacylglyceryl)Cys-, in which Xaa is hydrophobic (preferably Leu), and Yaa (Ala or Ser) and Zaa (Gly or Ala) have small, neutral side chains.. The protein operates within protein modification; lipoprotein biosynthesis (signal peptide cleavage). Its function is as follows. This protein specifically catalyzes the removal of signal peptides from prolipoproteins. The chain is Lipoprotein signal peptidase from Nitrobacter hamburgensis (strain DSM 10229 / NCIMB 13809 / X14).